Consider the following 504-residue polypeptide: ATP synthase subunit alpha (504 aa).

ATP is bound at residue 169–176 (GDRQTGKT).

It belongs to the ATPase alpha/beta chains family. F-type ATPases have 2 components, CF(1) - the catalytic core - and CF(0) - the membrane proton channel. CF(1) has five subunits: alpha(3), beta(3), gamma(1), delta(1), epsilon(1). CF(0) has three main subunits: a(1), b(2) and c(9-12). The alpha and beta chains form an alternating ring which encloses part of the gamma chain. CF(1) is attached to CF(0) by a central stalk formed by the gamma and epsilon chains, while a peripheral stalk is formed by the delta and b chains.

The protein localises to the cell membrane. It carries out the reaction ATP + H2O + 4 H(+)(in) = ADP + phosphate + 5 H(+)(out). In terms of biological role, produces ATP from ADP in the presence of a proton gradient across the membrane. The alpha chain is a regulatory subunit. The sequence is that of ATP synthase subunit alpha from Clostridium botulinum (strain Eklund 17B / Type B).